The following is a 313-amino-acid chain: 4-hydroxy-3-methylbut-2-enyl diphosphate reductase (313 aa).

Residue cysteine 13 coordinates [4Fe-4S] cluster. Histidine 41 and histidine 75 together coordinate (2E)-4-hydroxy-3-methylbut-2-enyl diphosphate. Dimethylallyl diphosphate contacts are provided by histidine 41 and histidine 75. Positions 41 and 75 each coordinate isopentenyl diphosphate. Residue cysteine 97 coordinates [4Fe-4S] cluster. (2E)-4-hydroxy-3-methylbut-2-enyl diphosphate is bound at residue histidine 125. Histidine 125 is a binding site for dimethylallyl diphosphate. Histidine 125 contacts isopentenyl diphosphate. Residue glutamate 127 is the Proton donor of the active site. Threonine 168 provides a ligand contact to (2E)-4-hydroxy-3-methylbut-2-enyl diphosphate. A [4Fe-4S] cluster-binding site is contributed by cysteine 218. The (2E)-4-hydroxy-3-methylbut-2-enyl diphosphate site is built by serine 246, serine 247, asparagine 248, and serine 295. Dimethylallyl diphosphate is bound by residues serine 246, serine 247, asparagine 248, and serine 295. Serine 246, serine 247, asparagine 248, and serine 295 together coordinate isopentenyl diphosphate.

It belongs to the IspH family. [4Fe-4S] cluster is required as a cofactor.

It catalyses the reaction isopentenyl diphosphate + 2 oxidized [2Fe-2S]-[ferredoxin] + H2O = (2E)-4-hydroxy-3-methylbut-2-enyl diphosphate + 2 reduced [2Fe-2S]-[ferredoxin] + 2 H(+). The catalysed reaction is dimethylallyl diphosphate + 2 oxidized [2Fe-2S]-[ferredoxin] + H2O = (2E)-4-hydroxy-3-methylbut-2-enyl diphosphate + 2 reduced [2Fe-2S]-[ferredoxin] + 2 H(+). It participates in isoprenoid biosynthesis; dimethylallyl diphosphate biosynthesis; dimethylallyl diphosphate from (2E)-4-hydroxy-3-methylbutenyl diphosphate: step 1/1. The protein operates within isoprenoid biosynthesis; isopentenyl diphosphate biosynthesis via DXP pathway; isopentenyl diphosphate from 1-deoxy-D-xylulose 5-phosphate: step 6/6. Its function is as follows. Catalyzes the conversion of 1-hydroxy-2-methyl-2-(E)-butenyl 4-diphosphate (HMBPP) into a mixture of isopentenyl diphosphate (IPP) and dimethylallyl diphosphate (DMAPP). Acts in the terminal step of the DOXP/MEP pathway for isoprenoid precursor biosynthesis. In Chlorobium phaeovibrioides (strain DSM 265 / 1930) (Prosthecochloris vibrioformis (strain DSM 265)), this protein is 4-hydroxy-3-methylbut-2-enyl diphosphate reductase.